The primary structure comprises 1407 residues: DNA-directed RNA polymerase subunit beta' (1407 aa).

Zn(2+)-binding residues include Cys-70, Cys-72, Cys-85, and Cys-88. 3 residues coordinate Mg(2+): Asp-460, Asp-462, and Asp-464. Residues Cys-814, Cys-888, Cys-895, and Cys-898 each coordinate Zn(2+). Position 972 is an N6-acetyllysine (Lys-972).

The protein belongs to the RNA polymerase beta' chain family. As to quaternary structure, the RNAP catalytic core consists of 2 alpha, 1 beta, 1 beta' and 1 omega subunit. When a sigma factor is associated with the core the holoenzyme is formed, which can initiate transcription. Mg(2+) serves as cofactor. The cofactor is Zn(2+).

The enzyme catalyses RNA(n) + a ribonucleoside 5'-triphosphate = RNA(n+1) + diphosphate. DNA-dependent RNA polymerase catalyzes the transcription of DNA into RNA using the four ribonucleoside triphosphates as substrates. The sequence is that of DNA-directed RNA polymerase subunit beta' from Escherichia coli (strain SMS-3-5 / SECEC).